A 203-amino-acid chain; its full sequence is Small ribosomal subunit protein uS4 (203 aa).

The S4 RNA-binding domain maps to 93–156 (RRLDNVVYRL…AKVPAILEAV (64 aa)).

The protein belongs to the universal ribosomal protein uS4 family. Part of the 30S ribosomal subunit. Contacts protein S5. The interaction surface between S4 and S5 is involved in control of translational fidelity.

One of the primary rRNA binding proteins, it binds directly to 16S rRNA where it nucleates assembly of the body of the 30S subunit. Its function is as follows. With S5 and S12 plays an important role in translational accuracy. In Streptococcus thermophilus (strain CNRZ 1066), this protein is Small ribosomal subunit protein uS4.